The primary structure comprises 699 residues: Elongation factor G (699 aa).

The 281-residue stretch at 8-288 folds into the tr-type G domain; that stretch reads EDYRNFGIMA…AVVDYLPSPL (281 aa). GTP contacts are provided by residues 17 to 24, 86 to 90, and 140 to 143; these read AHIDAGKT, DTPGH, and NKMD.

This sequence belongs to the TRAFAC class translation factor GTPase superfamily. Classic translation factor GTPase family. EF-G/EF-2 subfamily.

It is found in the cytoplasm. Functionally, catalyzes the GTP-dependent ribosomal translocation step during translation elongation. During this step, the ribosome changes from the pre-translocational (PRE) to the post-translocational (POST) state as the newly formed A-site-bound peptidyl-tRNA and P-site-bound deacylated tRNA move to the P and E sites, respectively. Catalyzes the coordinated movement of the two tRNA molecules, the mRNA and conformational changes in the ribosome. This is Elongation factor G from Rhizobium etli (strain CIAT 652).